Here is a 1612-residue protein sequence, read N- to C-terminus: MTGAPPYHPQSPTQQSHYAGYSPSNKPRHYYPNSEHYQQQPPQTPPAFPQPNLARSPHYSHAPSPLPGALPPLNGGAPTPAHPSDPSPQYQAHSAAGTPQYPLPRPYSGSLLPASGTSPYGPSTPSHAHPSSRPDSHAHVSPKKEPESHFAVNHGAPAYSVMREPQASPPKEAKPARAADPMSFASILSGPTEEQAPPKIQSPTPGLGTIHSAVPAANATSLNPPPASFHPKVGDIEPVPPVSAPRLEKKPSADKRQRNTEKEDLKSAENPTNGVTEPPKILRPPRRIMSEKETEMVNKYMVEIDNAEKSDVEAPGFEQERERYILKGKKRALDVERAESIRRKRRRHDYLLKLGKSFEKQANAGMDRFRYANEASVISEVQAKEIQDEKERKKDMQRKRRRENTVRMEMQKKLEAELKANETQDSAEKAKFLREAERAQRKIKTTKRALEGVTEPEEIGEITPLAPNLEGGITSSFHIGRSSPSRRKTGRGGPVTRPKKSKEQKQAEKDAAEAAYAAMENDEPLPLAPREDPRKESLKKDAKGGRSKEATPVPVSTYESKGYNQIYEQIWRDIARKDIPKVYRTKVNSLSTRQENLRKTAQLASKQSRKWQERTNKSMKDTQARAKRTMREMMSFWKRNEREERDLRRLAEKQELESAKRAEAEREANRQKRKLNFLISQTELYSHFIGRKIPGAGGESGDAGVQGTEAMDLTPGAGAKVTNFEDLDFDAEDDTALRQAAMANAQSAVQKAQERARAFDDPNKSTMDTMDDSELNFQNPTSLGDIEISQPTMLTAKLKEYQLKGLNWLVNLYEQGINGILADEMGLGKTIQSISVMAYLAEVHNIWGPFLVIAPASTLHNWQQEITKFVPNIKVLPYWGNAKDRKILRKFWDRKHITYTKESEFHVLVTSYQLVVLDAQYFQKVKWQYMILDEAQAIKSSQSSRWKSLLGFHCRNRLLLTGTPIQNNMQELWALLHFIMPTLFDSHDEFSEWFSKDIESHAQSNTKLNEDQLRRLHMILKPFMLRRVKKHVQQELGDKVEKDVFCDLTYRQRALYTNLRNRVSIMDLIEKAAVGDETDSTTLMNLVMQFRKVCNHPDLFERAETKSPFSLAHFAETASFNIKQSIEDDGAFSFLRFVDTSVGEAFNYSHQGVFERALRRRGQTNRLSRLSVVYDEDESSTATLPHTLFNIVDRNDRQAVYDIAVEGHMRELMNVSRSVFEQEGLNVIEPCAGPAASAPPITLVSSGQEALIETQDALFNVPVQHALFGTPSKAMEEQIIEQQLDPTPYSLPPMLPEPISTKGRYTHIEVPSMRRFVTDSGKLAKLDELLRELKAGGHRVLLYFQMTRMIDLMEEYLTYRNYKYCRLDGSTKLEDRRDTVADFQQRPDIFVFLLSTRAGGLGINLTAADTVIFYDSDWNPTIDSQAMDRAHRLGQTRQVTVYRLITRSTIEERIRKRALQKEEVQRVVISGGAAGGVDFNTRNRDSKTKDIAMWLADDEQAELIEQKEREALERGETFGASKGGKKNAQKRKRDVTLDDMYHEGEGNFDDASAKPSGAATPVSTAENIGTPSASTPVPKRGRGRGGKGTAKRAKTTKERLRLIDGDGGLGSG.

Disordered regions lie at residues 1–288 (MTGA…PRRI), 387–409 (QDEKERKKDMQRKRRRENTVRME), 438–554 (RAQR…TPVP), and 607–626 (QSRKWQERTNKSMKDTQARA). Residues 10-25 (QSPTQQSHYAGYSPSN) are compositionally biased toward polar residues. Residues 113 to 126 (PASGTSPYGPSTPS) are compositionally biased toward low complexity. Basic and acidic residues-rich tracts occupy residues 132 to 148 (SRPDSHAHVSPKKEPES) and 246 to 267 (RLEKKPSADKRQRNTEKEDLKS). The stretch at 379-455 (SEVQAKEIQD…TKRALEGVTE (77 aa)) forms a coiled coil. Basic and acidic residues-rich tracts occupy residues 501 to 512 (SKEQKQAEKDAA), 529 to 549 (PREDPRKESLKKDAKGGRSKE), and 610 to 624 (KWQERTNKSMKDTQA). In terms of domain architecture, DBINO spans 570-695 (IWRDIARKDI…SHFIGRKIPG (126 aa)). Residues 612 to 684 (QERTNKSMKD…LNFLISQTEL (73 aa)) are a coiled coil. The region spanning 810–982 (VNLYEQGING…WALLHFIMPT (173 aa)) is the Helicase ATP-binding domain. Residue 823–830 (DEMGLGKT) participates in ATP binding. The DEAQ box motif lies at 933 to 936 (DEAQ). The Helicase C-terminal domain occupies 1325-1485 (KLDELLRELK…GVDFNTRNRD (161 aa)). The tract at residues 1513 to 1612 (ERGETFGASK…IDGDGGLGSG (100 aa)) is disordered. The segment covering 1523–1533 (GGKKNAQKRKR) has biased composition (basic residues). The span at 1534 to 1545 (DVTLDDMYHEGE) shows a compositional bias: basic and acidic residues. The segment covering 1561 to 1575 (PVSTAENIGTPSAST) has biased composition (polar residues). The segment covering 1579–1594 (KRGRGRGGKGTAKRAK) has biased composition (basic residues). Positions 1595–1604 (TTKERLRLID) are enriched in basic and acidic residues.

This sequence belongs to the SNF2/RAD54 helicase family. In terms of assembly, component of the INO80 chromatin-remodeling complex.

The protein resides in the nucleus. It catalyses the reaction ATP + H2O = ADP + phosphate + H(+). ATPase component of the INO80 complex which remodels chromatin by shifting nucleosomes and is involved in DNA repair. In Emericella nidulans (strain FGSC A4 / ATCC 38163 / CBS 112.46 / NRRL 194 / M139) (Aspergillus nidulans), this protein is Chromatin-remodeling ATPase INO80 (ino80).